A 325-amino-acid chain; its full sequence is D site-binding protein (325 aa).

Disordered regions lie at residues Met-1–Leu-99, Gly-127–Glu-200, and Arg-229–Asp-255. Residues Gly-17–Leu-28 show a composition bias toward gly residues. Low complexity-rich tracts occupy residues Leu-29–Thr-38 and Ala-57–Ala-80. Ser-86 is subject to Phosphoserine. A compositionally biased stretch (pro residues) spans Pro-129–Gly-153. The span at Cys-157–Gly-167 shows a compositional bias: low complexity. The bZIP domain maps to Asp-255–Tyr-318. The interval Lys-257 to Lys-279 is basic motif. Residues Ile-283–Leu-297 are leucine-zipper.

Belongs to the bZIP family. PAR subfamily. In terms of assembly, binds DNA as a homodimer or a heterodimer. Can form a heterodimer with TEF. As to expression, ubiquitously expressed. Expressed in the suprachiasmatic nuclei (SCN) and in most peripheral tissues, with a strong circadian rhythmicity.

It is found in the nucleus. Functionally, this transcriptional activator recognizes and binds to the sequence 5'-RTTAYGTAAY-3' found in the promoter of genes such as albumin, CYP2A4 and CYP2A5. It is not essential for circadian rhythm generation, but modulates important clock output genes. May be a direct target for regulation by the circadian pacemaker component clock. May affect circadian period and sleep regulation. The polypeptide is D site-binding protein (DBP) (Homo sapiens (Human)).